A 448-amino-acid polypeptide reads, in one-letter code: UDP-glycosyltransferase 79B5 (448 aa).

UDP-alpha-D-glucose is bound by residues threonine 261, 320-322, 337-345, and 359-362; these read LEQ, HCGFGSMWE, and LADQ.

This sequence belongs to the UDP-glycosyltransferase family.

The protein is UDP-glycosyltransferase 79B5 (UGT79B5) of Arabidopsis thaliana (Mouse-ear cress).